We begin with the raw amino-acid sequence, 142 residues long: MVLSAADKSNVKAAWGKVGGHAADYGAEALERMFLSFPTTKTYFPHFDLSHGSAQVKGHGAKVANALTKAVGHLDDLPGALSELSDLHAHKLRVDPVNFKLLSHSLLVTLASHLPNDFTPAVHASLDKFLASVSTVLTSKYR.

The region spanning valine 2–arginine 142 is the Globin domain. Histidine 59 provides a ligand contact to O2. Histidine 88 is a heme b binding site.

It belongs to the globin family. Heterotetramer of two alpha chains and two beta chains. In terms of tissue distribution, red blood cells.

Functionally, involved in oxygen transport from the lung to the various peripheral tissues. In Bubalus bubalis (Domestic water buffalo), this protein is Hemoglobin subunit alpha-4.